The sequence spans 584 residues: Outer membrane transporter CdiB-2 (584 aa).

An N-terminal signal peptide occupies residues 1-20; the sequence is MATRFAILPVTALITLTAQA. A compositionally biased stretch (low complexity) spans 24–44; that stretch reads PTPNDQAAAARANAEQNQQAQ. Residues 24–72 are disordered; the sequence is PTPNDQAAAARANAEQNQQAQQRRDAQQRDATVQAPGVRSDVPRPEAYP. In terms of domain architecture, POTRA spans 98–171; sequence SKAQGASALP…GALKLALIPG (74 aa).

The protein belongs to the TPS (TC 1.B.20) family.

It localises to the cell outer membrane. Functionally, potential outer membrane protein component of a toxin-immunity protein module, which functions as a cellular contact-dependent growth inhibition (CDI) system. CDI modules allow bacteria to communicate with and inhibit the growth of closely related neighboring bacteria in a contact-dependent fashion. This protein may be required for secretion and assembly of the CdiA toxin protein. In terms of biological role, expression of this cdiAIB locus in B.thailandensis confers protection against other bacteria carrying the locus; growth inhibition requires cellular contact. Probable member of a two partner secretion pathway (TPS) in which it mediates the secretion of CdiA2. This is Outer membrane transporter CdiB-2 (cdiB2) from Burkholderia pseudomallei (strain 1026b).